The following is a 497-amino-acid chain: MDFAIRSDNPEKYRGDCIVVGVFESRKLTEAARVLDEAGKGHLGRIVDQGDMDGRANTTLLLHGISGIDSKRVLLIGLGKEEEFGEKVFLDVVRTTFKALQPTGAKDVGLYLTELTVKGRDVAWNVLQTVILAEESAYRFDRLKSKPEGRQPSLAKVDIGITDTSTAAAVETALQQGLAIAHGMKVTKDLGNLAPNICTPSYLAGQAEEMARTFNLKFSVLEEKDMEELGMGALLAVARGSHQPAKLIVLEYHGGKDSEKPVALVGKGVTFDAGGISLKPAAEMDEMKYDMGGAASVFGTLTAVAELKLPINVIGVIPTTENLPGGNATKPGDVVTSLSGQTIEILNTDAEGRLILCDALAYTERYDPEVVVDIATLTGACVVALGHVVSGVMGNDEPLVQELLQAGEQTYDRAWHLPLFDEYQEQLKSNFADTANIGSRWGGAITAACFLSRFTKKFRWAHLDIAGTAWKSGKEKGATGRPVPLLTQFLISRANKH.

Residues Lys267 and Asp272 each contribute to the Mn(2+) site. Residue Lys279 is part of the active site. The Mn(2+) site is built by Asp290, Asp349, and Glu351. Arg353 is an active-site residue.

The protein belongs to the peptidase M17 family. Mn(2+) is required as a cofactor.

The protein localises to the cytoplasm. The enzyme catalyses Release of an N-terminal amino acid, Xaa-|-Yaa-, in which Xaa is preferably Leu, but may be other amino acids including Pro although not Arg or Lys, and Yaa may be Pro. Amino acid amides and methyl esters are also readily hydrolyzed, but rates on arylamides are exceedingly low.. It carries out the reaction Release of an N-terminal amino acid, preferentially leucine, but not glutamic or aspartic acids.. Its function is as follows. Presumably involved in the processing and regular turnover of intracellular proteins. Catalyzes the removal of unsubstituted N-terminal amino acids from various peptides. The protein is Probable cytosol aminopeptidase of Nitrosomonas europaea (strain ATCC 19718 / CIP 103999 / KCTC 2705 / NBRC 14298).